The sequence spans 300 residues: Probable protein phosphatase 2C 3 (300 aa).

The 276-residue stretch at 23–298 (IFAASEMQGW…DNMTTILVYL (276 aa)) folds into the PPM-type phosphatase domain. Residues Asp-57, Gly-58, Asp-237, and Asp-289 each contribute to the Mn(2+) site.

Belongs to the PP2C family. It depends on Mg(2+) as a cofactor. Mn(2+) serves as cofactor.

It is found in the membrane. The catalysed reaction is O-phospho-L-seryl-[protein] + H2O = L-seryl-[protein] + phosphate. It catalyses the reaction O-phospho-L-threonyl-[protein] + H2O = L-threonyl-[protein] + phosphate. Enzyme with a broad specificity. The sequence is that of Probable protein phosphatase 2C 3 from Paramecium tetraurelia.